The chain runs to 270 residues: Glutamate racemase (270 aa).

Substrate contacts are provided by residues 10–11 (DS) and 42–43 (YG). Cys-74 acts as the Proton donor/acceptor in catalysis. Substrate is bound at residue 75–76 (NT). Catalysis depends on Cys-189, which acts as the Proton donor/acceptor. Position 190–191 (190–191 (TH)) interacts with substrate.

Belongs to the aspartate/glutamate racemases family.

It catalyses the reaction L-glutamate = D-glutamate. It participates in cell wall biogenesis; peptidoglycan biosynthesis. Functionally, provides the (R)-glutamate required for cell wall biosynthesis. This chain is Glutamate racemase, found in Bartonella quintana (strain Toulouse) (Rochalimaea quintana).